Here is a 280-residue protein sequence, read N- to C-terminus: F420-dependent methylenetetrahydromethanopterin dehydrogenase (280 aa).

This sequence belongs to the MTD family.

The enzyme catalyses 5,10-methylenetetrahydromethanopterin + oxidized coenzyme F420-(gamma-L-Glu)(n) + 2 H(+) = 5,10-methenyl-5,6,7,8-tetrahydromethanopterin + reduced coenzyme F420-(gamma-L-Glu)(n). It participates in one-carbon metabolism; methanogenesis from CO(2); 5,10-methylene-5,6,7,8-tetrahydromethanopterin from 5,10-methenyl-5,6,7,8-tetrahydromethanopterin (coenzyme F420 route): step 1/1. Functionally, catalyzes the reversible reduction of methenyl-H(4)MPT(+) to methylene-H(4)MPT. This Methanocorpusculum labreanum (strain ATCC 43576 / DSM 4855 / Z) protein is F420-dependent methylenetetrahydromethanopterin dehydrogenase.